Here is a 338-residue protein sequence, read N- to C-terminus: Deoxyhypusine hydroxylase (338 aa).

HEAT-like PBS-type repeat units follow at residues 71 to 97 (LKHE…VLKD), 104 to 130 (CRHE…LKDD), 200 to 233 (QRYR…GLKD), 238 to 264 (FRHE…CLSN), and 271 to 298 (VRHE…FLND). The Fe cation site is built by His73, Glu74, His106, and Glu107. 4 residues coordinate Fe cation: His240, Glu241, His273, and Glu274.

This sequence belongs to the deoxyhypusine hydroxylase family. Requires Fe(2+) as cofactor.

The protein resides in the cytoplasm. Its subcellular location is the nucleus. It carries out the reaction [eIF5A protein]-deoxyhypusine + AH2 + O2 = [eIF5A protein]-hypusine + A + H2O. Its pathway is protein modification; eIF5A hypusination. Catalyzes the hydroxylation of the N(6)-(4-aminobutyl)-L-lysine intermediate to form hypusine, an essential post-translational modification only found in mature eIF-5A factor. The sequence is that of Deoxyhypusine hydroxylase (lia1) from Aspergillus niger (strain ATCC MYA-4892 / CBS 513.88 / FGSC A1513).